A 181-amino-acid chain; its full sequence is Large ribosomal subunit protein uL5 (181 aa).

The protein belongs to the universal ribosomal protein uL5 family. As to quaternary structure, part of the 50S ribosomal subunit; contacts the 5S rRNA and probably tRNA. Forms a bridge to the 30S subunit in the 70S ribosome.

Its function is as follows. This is one of the proteins that bind and probably mediate the attachment of the 5S RNA into the large ribosomal subunit, where it forms part of the central protuberance. In the 70S ribosome it contacts protein S13 of the 30S subunit (bridge B1b), connecting the 2 subunits; this bridge is implicated in subunit movement. May contact the P site tRNA; the 5S rRNA and some of its associated proteins might help stabilize positioning of ribosome-bound tRNAs. This Methanococcus maripaludis (strain DSM 14266 / JCM 13030 / NBRC 101832 / S2 / LL) protein is Large ribosomal subunit protein uL5.